Consider the following 816-residue polypeptide: MSRPQGLLWLPLLFTPVCVMLNSNVLLWLTALAIKFTLIDSQAQYPVVNTNYGKIRGLRTPLPNEILGPVEQYLGVPYASPPTGERRFQPPEPPSSWTGIRNTTQFAAVCPQHLDERSLLHDMLPIWFTANLDTLMTYVQDQNEDCLYLNIYVPTEDDIHDQNSKKPVMVYIHGGSYMEGTGNMIDGSILASYGNVIVITINYRLGILGFLSTGDQAAKGNYGLLDQIQALRWIEENVGAFGGDPKRVTIFGSGAGASCVSLLTLSHYSEGLFQKAIIQSGTALSSWAVNYQPAKYTRILADKVGCNMLDTTDMVECLRNKNYKELIQQTITPATYHIAFGPVIDGDVIPDDPQILMEQGEFLNYDIMLGVNQGEGLKFVDGIVDNEDGVTPNDFDFSVSNFVDNLYGYPEGKDTLRETIKFMYTDWADKENPETRRKTLVALFTDHQWVAPAVATADLHAQYGSPTYFYAFYHHCQSEMKPSWADSAHGDEVPYVFGIPMIGPTELFSCNFSKNDVMLSAVVMTYWTNFAKTGDPNQPVPQDTKFIHTKPNRFEEVAWSKYNPKDQLYLHIGLKPRVRDHYRATKVAFWLELVPHLHNLNEIFQYVSTTTKVPPPDMTSFPYGTRRSPAKIWPTTKRPAITPANNPKHSKDPHKTGPEDTTVLIETKRDYSTELSVTIAVGASLLFLNILAFAALYYKKDKRRHETHRRPSPQRNTTNDIAHIQNEEIMSLQMKQLEHDHECESLQAHDTLRLTCPPDYTLTLRRSPDDIPLMTPNTITMIPNTLTGMQPLHTFNTFSGGQNSTNLPHGHSTTRV.

The N-terminal stretch at 1–41 (MSRPQGLLWLPLLFTPVCVMLNSNVLLWLTALAIKFTLIDS) is a signal peptide. Residues 42–676 (QAQYPVVNTN…TKRDYSTELS (635 aa)) lie on the Extracellular side of the membrane. Asn-102 carries an N-linked (GlcNAc...) asparagine glycan. Cystine bridges form between Cys-110–Cys-146 and Cys-306–Cys-317. An interaction with NRXN1 region spans residues 359–364 (QGEFLN). A disulfide bridge connects residues Cys-476 and Cys-510. An N-linked (GlcNAc...) asparagine glycan is attached at Asn-511. Residues 636-659 (TKRPAITPANNPKHSKDPHKTGPE) are disordered. Basic and acidic residues predominate over residues 649–658 (HSKDPHKTGP). Residues 677-697 (VTIAVGASLLFLNILAFAALY) form a helical membrane-spanning segment. The Cytoplasmic portion of the chain corresponds to 698 to 816 (YKKDKRRHET…LPHGHSTTRV (119 aa)). Phosphoserine is present on Ser-712.

Belongs to the type-B carboxylesterase/lipase family. Homodimer. Interacts with NRXN1 in a calcium-dependent manner. Interaction with neurexins is mediated by heparan sulfate glycan modification on neurexin. Interacts through its C-terminus with DLG4/PSD-95 third PDZ domain. As to expression, expressed at highest levels in heart. Expressed at lower levels in liver, skeletal muscle and pancreas and at very low levels in brain.

It localises to the cell membrane. The protein localises to the postsynaptic density membrane. Functionally, cell surface protein involved in cell-cell-interactions via its interactions with neurexin family members. This Homo sapiens (Human) protein is Neuroligin-4, X-linked (NLGN4X).